The sequence spans 483 residues: Proline--tRNA ligase (483 aa).

Belongs to the class-II aminoacyl-tRNA synthetase family. ProS type 3 subfamily. As to quaternary structure, homodimer.

The protein localises to the cytoplasm. It carries out the reaction tRNA(Pro) + L-proline + ATP = L-prolyl-tRNA(Pro) + AMP + diphosphate. Its function is as follows. Catalyzes the attachment of proline to tRNA(Pro) in a two-step reaction: proline is first activated by ATP to form Pro-AMP and then transferred to the acceptor end of tRNA(Pro). The protein is Proline--tRNA ligase of Mycoplasma pneumoniae (strain ATCC 29342 / M129 / Subtype 1) (Mycoplasmoides pneumoniae).